The chain runs to 302 residues: Aquaporin NIP3-1 (302 aa).

The interval 1 to 31 is disordered; sequence MEPGSTPPNGSAPATPGTPAPLFSSGGPRVD. The span at 7–21 shows a compositional bias: low complexity; it reads PPNGSAPATPGTPAP. 2 helical membrane-spanning segments follow: residues 76–96 and 102–122; these read LGAE…APIV and GAIS…TVIL. Residues 133–135 carry the NPA 1 motif; that stretch reads NPS. 3 helical membrane passes run 149-169, 193-213, and 217-237; these read LQVP…AFAL, AFFT…AVAT, and AVGE…ILVA. Residues 246–248 carry the NPA 2 motif; the sequence is NPV. Residues 264 to 284 form a helical membrane-spanning segment; the sequence is WIYLLAPTLGALAGASVYKAV.

This sequence belongs to the MIP/aquaporin (TC 1.A.8) family. NIP (TC 1.A.8.12) subfamily.

The protein resides in the membrane. Its function is as follows. Aquaporins facilitate the transport of water and small neutral solutes across cell membranes. The protein is Aquaporin NIP3-1 (NIP3-1) of Zea mays (Maize).